A 283-amino-acid polypeptide reads, in one-letter code: Pantothenate synthetase (283 aa).

30–37 is an ATP binding site; that stretch reads MGALHEGH. His37 serves as the catalytic Proton donor. (R)-pantoate is bound at residue Gln61. Residue Gln61 participates in beta-alanine binding. Residue 147–150 participates in ATP binding; that stretch reads GEKD. Gln153 lines the (R)-pantoate pocket. Residues Ile176 and 184 to 187 each bind ATP; that span reads VSSR.

It belongs to the pantothenate synthetase family. In terms of assembly, homodimer.

Its subcellular location is the cytoplasm. The catalysed reaction is (R)-pantoate + beta-alanine + ATP = (R)-pantothenate + AMP + diphosphate + H(+). It participates in cofactor biosynthesis; (R)-pantothenate biosynthesis; (R)-pantothenate from (R)-pantoate and beta-alanine: step 1/1. Catalyzes the condensation of pantoate with beta-alanine in an ATP-dependent reaction via a pantoyl-adenylate intermediate. In Pelodictyon phaeoclathratiforme (strain DSM 5477 / BU-1), this protein is Pantothenate synthetase.